The chain runs to 189 residues: MAIKSDRWIREMSEKHGMIEPYAENQVRFDKNGEKLISYGVSSYGYDVRCAREFKVFTNVHSAIVDPKNFDEKSFIDIESDVCIIPPNSFALARTIEYFRIPRNVLTVCLGKSTYARCGIIVNVTPLEPEWEGHVTLEFSNTTNLPARIYAGEGVAQMLFFESDEVCETSYKDRGGKYQGQTGVTLPKT.

DCTP is bound by residues 112-117 (KSTYAR), 136-138 (TLE), Gln-157, Tyr-171, and Gln-181. Glu-138 (proton donor/acceptor) is an active-site residue.

Belongs to the dCTP deaminase family. As to quaternary structure, homotrimer.

It carries out the reaction dCTP + H2O + H(+) = dUTP + NH4(+). The protein operates within pyrimidine metabolism; dUMP biosynthesis; dUMP from dCTP (dUTP route): step 1/2. Catalyzes the deamination of dCTP to dUTP. In Acinetobacter baumannii (strain SDF), this protein is dCTP deaminase.